The primary structure comprises 1363 residues: Spike glycoprotein (1363 aa).

A signal peptide spans 1–13 (MFLILLISLPMAL). The Extracellular segment spans residues 14-1307 (AVIGDLKCTT…GTYEYYVKWP (1294 aa)). The BetaCoV S1-NTD domain occupies 15 to 298 (VIGDLKCTTV…DFMSEIKCKT (284 aa)). Disulfide bonds link C21-C165, C160-C193, C172-C252, C286-C296, and C331-C356. N-linked (GlcNAc...) asparagine; by host glycans are attached at residues N59 and N133. A glycan (N-linked (GlcNAc...) asparagine; by host) is linked at N198. Positions 329–617 (PDCNIEAWLN…DVNSGTTCST (289 aa)) constitute a BetaCoV S1-CTD domain. A glycan (N-linked (GlcNAc...) asparagine; by host) is linked at N359. Cystine bridges form between C374–C427 and C386–C615. 7 N-linked (GlcNAc...) asparagine; by host glycosylation sites follow: N437, N649, N676, N696, N714, N739, and N788. Fusion peptide regions lie at residues 914–935 (SAIE…VEAY) and 933–953 (EAYN…VQSY). An N-linked (GlcNAc...) asparagine; by host glycan is attached at N937. An intrachain disulfide couples C938 to C949. Residues 1014–1064 (QKLIANAFNNALDAIQEGFDATNSALVKIQAVVNANAEALNNLLQQLSNRF) are heptad repeat 1. A coiled-coil region spans residues 1043–1087 (QAVVNANAEALNNLLQQLSNRFGAISSSLQEILSRLDALEAQAQI). N-linked (GlcNAc...) asparagine; by host glycans are attached at residues N1194, N1224, N1234, N1253, N1267, and N1288. The tract at residues 1258-1296 (APDLSLDYINVTFLDLQDEMNRLQEAIKVLNQSYINLKD) is heptad repeat 2. Positions 1269–1297 (TFLDLQDEMNRLQEAIKVLNQSYINLKDI) form a coiled coil. A helical transmembrane segment spans residues 1308-1328 (WYVWLLIGLAGVAMLVLLFFI). The Cytoplasmic segment spans residues 1329–1363 (CCCTGCGTSCFKKCGGCCDDYTGHQELVIKTSHDD). Positions 1359 to 1363 (TSHDD) match the KxHxx motif.

This sequence belongs to the betacoronaviruses spike protein family. As to quaternary structure, homotrimer; each monomer consists of a S1 and a S2 subunit. The resulting peplomers protrude from the virus surface as spikes. Specific enzymatic cleavages in vivo yield mature proteins. The precursor is processed into S1 and S2 by host cell furin or another cellular protease to yield the mature S1 and S2 proteins. Additionally, a second cleavage leads to the release of a fusion peptide after viral attachment to host cell receptor. In terms of processing, the cytoplasmic Cys-rich domain is palmitoylated. Spike glycoprotein is digested within host endosomes.

Its subcellular location is the virion membrane. It localises to the host endoplasmic reticulum-Golgi intermediate compartment membrane. It is found in the host cell membrane. In terms of biological role, attaches the virion to the cell membrane by interacting with host receptor, initiating the infection. Its function is as follows. Mediates fusion of the virion and cellular membranes by acting as a class I viral fusion protein. Under the current model, the protein has at least three conformational states: pre-fusion native state, pre-hairpin intermediate state, and post-fusion hairpin state. During viral and target cell membrane fusion, the coiled coil regions (heptad repeats) assume a trimer-of-hairpins structure, positioning the fusion peptide in close proximity to the C-terminal region of the ectodomain. The formation of this structure appears to drive apposition and subsequent fusion of viral and target cell membranes. Acts as a viral fusion peptide which is unmasked following S2 cleavage occurring upon virus endocytosis. This Bos taurus (Bovine) protein is Spike glycoprotein.